A 124-amino-acid chain; its full sequence is uncharacterized protein (124 aa).

Residues 13–33 (IIFMALYFVITGIVIRLIGYS) form a helical membrane-spanning segment.

It is found in the membrane. This is an uncharacterized protein from Bacillus anthracis.